A 153-amino-acid chain; its full sequence is MSVTDIVLIVFIALLLAYAIYDEFIMNMMKGKTRLQIQLKRKSKIDCAIFVGLIAILVYNNVMANGEPLTTYLLVGLALIAFYLSYIRWPKLLFKNTGFFYANAFIEYRRIKSMNLSEDGILVIDLEQRRLLIQVRQLDDLEKIYNFFVENQS.

3 helical membrane-spanning segments follow: residues 6 to 26 (IVLI…EFIM), 45 to 65 (IDCA…VMAN), and 67 to 87 (EPLT…LSYI).

Belongs to the UPF0266 family.

The protein resides in the cell inner membrane. The sequence is that of UPF0266 membrane protein YE1773 from Yersinia enterocolitica serotype O:8 / biotype 1B (strain NCTC 13174 / 8081).